The following is a 1939-amino-acid chain: Myosin-4 (1939 aa).

The Myosin N-terminal SH3-like domain occupies 33–82; sequence DAKSSVFVVDAKESYVKATVQSREGGKVTAKTEGGATVTVKEDQVFSMNP. S36 is subject to Phosphoserine. 2 positions are modified to phosphothreonine: T64 and T69. S79 is subject to Phosphoserine. Residues 86–782 form the Myosin motor domain; that stretch reads DKIEDMAMMT…LLGTLEEMRD (697 aa). An N6,N6,N6-trimethyllysine modification is found at K130. 179 to 186 lines the ATP pocket; sequence GESGAGKT. Y389 carries the post-translational modification Phosphotyrosine. A Phosphothreonine modification is found at T391. S392 bears the Phosphoserine mark. Residue T419 is modified to Phosphothreonine. Position 424 is a phosphotyrosine (Y424). A Phosphoserine modification is found at S625. The segment at 659-681 is actin-binding; that stretch reads LNKLMTNLKSTHPHFVRCLIPNE. Position 757 is a pros-methylhistidine (H757). The segment at 761-775 is actin-binding; sequence KFGHTKVFFKAGLLG. T776 bears the Phosphothreonine mark. The region spanning 785–814 is the IQ domain; the sequence is LAQLITRTQAVCRGYLMRVEFRKMMERRES. A coiled-coil region spans residues 843-1939; it reads LLKSAETEKE…EVHTKVISEE (1097 aa). A phosphoserine mark is found at S1092 and S1096. Disordered regions lie at residues 1128–1147 and 1153–1172; these read AERA…SREL and RLEE…KKRE. 2 positions are modified to phosphoserine: S1162 and S1237. The residue at position 1241 (T1241) is a Phosphothreonine. S1243 carries the post-translational modification Phosphoserine. T1255 is subject to Phosphothreonine. A Phosphoserine modification is found at S1261. T1265 carries the post-translational modification Phosphothreonine. The residue at position 1278 (S1278) is a Phosphoserine. Residue T1286 is modified to Phosphothreonine. 5 positions are modified to phosphoserine: S1288, S1292, S1303, S1306, and S1413. Position 1464 is a phosphotyrosine (Y1464). Position 1467 is a phosphothreonine (T1467). The residue at position 1474 (S1474) is a Phosphoserine. Residue Y1492 is modified to Phosphotyrosine. S1495 bears the Phosphoserine mark. T1501 is modified (phosphothreonine). S1514 is subject to Phosphoserine. A Phosphothreonine modification is found at T1517. A phosphoserine mark is found at S1542, S1547, S1554, S1574, S1600, S1603, S1714, and S1726. Residues T1730 and T1736 each carry the phosphothreonine modification. A Phosphoserine modification is found at S1739.

It belongs to the TRAFAC class myosin-kinesin ATPase superfamily. Myosin family. As to quaternary structure, muscle myosin is a hexameric protein that consists of 2 heavy chain subunits (MHC), 2 alkali light chain subunits (MLC) and 2 regulatory light chain subunits (MLC-2).

The protein localises to the cytoplasm. The protein resides in the myofibril. Muscle contraction. The protein is Myosin-4 of Rattus norvegicus (Rat).